The primary structure comprises 794 residues: Ubiquitin carboxyl-terminal hydrolase 10 (794 aa).

An N-acetylalanine modification is found at A2. An interaction with p53/TP53 region spans residues 2 to 99 (ALHNPQYIFG…ILGCPTSKKT (98 aa)). A G3BP1-binding region spans residues 6–21 (PQYIFGDFSPDEFNQF). T24 and T99 each carry phosphothreonine. Positions 123–164 (ESSSNAEAETLENDSGAGGLGQRERKKKKKRPPGYYSYLKDG) are disordered. Residues S209, S224, and S316 each carry the phosphoserine modification. The interval 303 to 326 (ESADLDPAKPESQSPPAESALSVS) is disordered. Positions 313 to 326 (ESQSPPAESALSVS) are enriched in polar residues. S332 is subject to Phosphoserine; by ATM. 2 positions are modified to phosphoserine: S361 and S366. The region spanning 411-791 (RGLINKGNWC…TAYLLYYRRV (381 aa)) is the USP domain. C420 acts as the Nucleophile in catalysis. At S543 the chain carries Phosphoserine. The interval 546 to 588 (HEKHSVSNGPGSHLIEDEELEDTGEGSEDEWEQVGPKNKTSVT) is disordered. Residues 561-577 (EDEELEDTGEGSEDEWE) show a composition bias toward acidic residues. T568 carries the post-translational modification Phosphothreonine. A Phosphoserine modification is found at S572. Catalysis depends on H745, which acts as the Proton acceptor.

The protein belongs to the peptidase C19 family. USP10 subfamily. As to quaternary structure, found in a deubiquitination complex with TANK, USP10 and ZC3H12A; this complex inhibits genotoxic stress- or interleukin-1-beta (IL1B)-mediated NF-kappa-B activation by promoting IKBKG or TRAF6 deubiquitination. Interacts with IKBKG; this interaction increases in response to DNA damage. Interacts with TANK; this interaction increases in response to DNA damage. Interacts with TRAF6; this interaction increases in response to DNA damage. Interacts with ZC3H12A; this interaction increases in response to DNA damage. Interacts with G3BP1 (via NTF2 domain) and G3BP2 (via NTF2 domain); inhibiting stress granule formation. In terms of processing, phosphorylated by ATM following DNA damage, leading to stabilization and translocation it to the nucleus. Post-translationally, ubiquitinated. Deubiquitinated by USP13.

Its subcellular location is the cytoplasm. It is found in the nucleus. It localises to the early endosome. It carries out the reaction Thiol-dependent hydrolysis of ester, thioester, amide, peptide and isopeptide bonds formed by the C-terminal Gly of ubiquitin (a 76-residue protein attached to proteins as an intracellular targeting signal).. Specifically inhibited by spautin-1 (specific and potent autophagy inhibitor-1), a derivative of MBCQ that binds to USP10 and inhibits deubiquitinase activity. Regulated by PIK3C3/VPS34-containing complexes. Functionally, hydrolase that can remove conjugated ubiquitin from target proteins such as p53/TP53, RPS2/us5, RPS3/us3, RPS10/eS10, BECN1, SNX3 and CFTR. Acts as an essential regulator of p53/TP53 stability: in unstressed cells, specifically deubiquitinates p53/TP53 in the cytoplasm, leading to counteract MDM2 action and stabilize p53/TP53. Following DNA damage, translocates to the nucleus and deubiquitinates p53/TP53, leading to regulate the p53/TP53-dependent DNA damage response. Component of a regulatory loop that controls autophagy and p53/TP53 levels: mediates deubiquitination of BECN1, a key regulator of autophagy, leading to stabilize the PIK3C3/VPS34-containing complexes. In turn, PIK3C3/VPS34-containing complexes regulate USP10 stability, suggesting the existence of a regulatory system by which PIK3C3/VPS34-containing complexes regulate p53/TP53 protein levels via USP10 and USP13. Does not deubiquitinate MDM2. Plays a key role in 40S ribosome subunit recycling when a ribosome has stalled during translation: acts both by inhibiting formation of stress granules, which store stalled translation pre-initiation complexes, and mediating deubiquitination of 40S ribosome subunits. Acts as a negative regulator of stress granules formation by lowering G3BP1 and G3BP2 valence, thereby preventing G3BP1 and G3BP2 ability to undergo liquid-liquid phase separation (LLPS) and assembly of stress granules. Promotes 40S ribosome subunit recycling following ribosome dissociation in response to ribosome stalling by mediating deubiquitination of 40S ribosomal proteins RPS2/us5, RPS3/us3 and RPS10/eS10, thereby preventing their degradation by the proteasome. Part of a ribosome quality control that takes place when ribosomes have stalled during translation initiation (iRQC): USP10 acts by removing monoubiquitination of RPS2/us5 and RPS3/us3, promoting 40S ribosomal subunit recycling. Deubiquitinates CFTR in early endosomes, enhancing its endocytic recycling. Involved in a TANK-dependent negative feedback response to attenuate NF-kappa-B activation via deubiquitinating IKBKG or TRAF6 in response to interleukin-1-beta (IL1B) stimulation or upon DNA damage. Deubiquitinates TBX21 leading to its stabilization. Plays a negative role in the RLR signaling pathway upon RNA virus infection by blocking the RIGI-mediated MAVS activation. Mechanistically, removes the unanchored 'Lys-63'-linked polyubiquitin chains of MAVS to inhibit its aggregation, essential for its activation. The polypeptide is Ubiquitin carboxyl-terminal hydrolase 10 (Usp10) (Rattus norvegicus (Rat)).